A 338-amino-acid chain; its full sequence is Glyceraldehyde-3-phosphate dehydrogenase (338 aa).

NAD(+) contacts are provided by Arg-13, Ile-14, Asp-35, Arg-80, and Ser-123. D-glyceraldehyde 3-phosphate contacts are provided by Ser-152, Cys-153, Thr-154, Thr-183, Arg-198, Thr-212, Gly-213, and Arg-235. Cys-153 serves as the catalytic Nucleophile. Residue Asn-317 participates in NAD(+) binding.

Belongs to the glyceraldehyde-3-phosphate dehydrogenase family. As to quaternary structure, homotetramer.

The protein resides in the tegument membrane. The enzyme catalyses D-glyceraldehyde 3-phosphate + phosphate + NAD(+) = (2R)-3-phospho-glyceroyl phosphate + NADH + H(+). Its pathway is carbohydrate degradation; glycolysis; pyruvate from D-glyceraldehyde 3-phosphate: step 1/5. Functionally, this antigen is associated with human resistance to schistosomiasis. This Schistosoma mansoni (Blood fluke) protein is Glyceraldehyde-3-phosphate dehydrogenase.